Here is a 1029-residue protein sequence, read N- to C-terminus: QMSYVDHSKSSGPPQPGPMGPMGPRGPPGPPGSSGPQGFTGPPGEPGEPGASGAMGSRGPSGPPGKNGDDGEPGKPGRPGERGAAGPQGARGFSGLDGAKGDAGPAGPKGESGAPGENGVPGVMGARGRPGPPGPSGARGNDGNTGPXGPPGXTGPAGPPGFPGGAGAKGETGPAGGRGNEGPQGARGEPGNPGPAGPAGPAGSPGTDGAPGAKGSPGAAGLAGAPGFGPAGAQGAVGAPGPKGNNGDPGASGPKGEPGAKGEPGPAGVQGLPGPSGEEGKRGARGEPGGAGPRGPPGERGAPGARGFPGADGGAGGKGAPGERGAPGALGAQGATGESGSPGAPGAPGSKGVTGSPGSPGPDGKTGPAGVAGQDGRPGPPGSAGARGQPGVMGFPGPKGPAGESGKPGERGPSGATGAVGAPGKDGDVGAPGPSGVAGPAGEKGEQGPAGPPGFQGLPGPQGATGETGKGLGGPTGPRGAPGPAGNDGAKGEPGAAGAPGGLGAPGMQGMPGERGAAGLPGAKGERGDAGGKGGDGAPGKDGARGMTGSLGVPGPPGAQGEKGEGGAVGVAGPTGPRGAPGERGETGPPGPAGFAGPPGADGQPGAKGETGDSGPKGDAGAPGPGGPVGASGPQGPAGPTGPKGARGGAGPPGATGFPGPAGRVGPPGPAGAAGPPGPVGPVGKDGARGARGETGAAGRPGEAGAAGAPGPSGEKGSPGXDGAPGGLPGPQGLAGQRGLPGQRGERGFSGLPGPSGEPGKQGPSGPVGERGPPGPAGPPGLSGAPGEAGREGSQGHDGAPGRDGSAGPKGDRGESGMAGPPGAPGAPGAPGAVGPSGKSGDRGETGPAGPAGPSGPAGVRGPAGPAGAKGDRGEAGEAGDRGGHRGFTGMQGLPGPAGAHGERGPAGASGPAGPRGPAGSNGAPGKDGMNGLPGPLGPPGPRGRNGEMGPAGPPGPPGPAGPPGPPGSGFDFVSQPLQEKAPDPFRGGHYRLRSPDGTQKLPLLDLAPMDVGAPDQEFGVEVGPVCFL.

The segment at 1 to 990 is disordered; the sequence is QMSYVDHSKS…KAPDPFRGGH (990 aa). A compositionally biased stretch (pro residues) spans 13 to 33; sequence PPQPGPMGPMGPRGPPGPPGS. A compositionally biased stretch (low complexity) spans 34–57; sequence SGPQGFTGPPGEPGEPGASGAMGS. The span at 67–81 shows a compositional bias: basic and acidic residues; the sequence is NGDDGEPGKPGRPGE. Composition is skewed to low complexity over residues 82-91, 120-129, and 136-147; these read RGAAGPQGAR, VPGVMGARGR, and SGARGNDGNTGP. A compositionally biased stretch (gly residues) spans 163–182; the sequence is PGGAGAKGETGPAGGRGNEG. 3 stretches are compositionally biased toward low complexity: residues 199–223, 233–267, and 299–309; these read AGPA…AGLA, AQGA…PGPA, and ERGAPGARGFP. A compositionally biased stretch (gly residues) spans 310 to 322; it reads GADGGAGGKGAPG. 2 stretches are compositionally biased toward low complexity: residues 323–351 and 429–465; these read ERGA…PGSK and VGAP…QGAT. Residues 466 to 477 show a composition bias toward gly residues; the sequence is GETGKGLGGPTG. The span at 478–497 shows a compositional bias: low complexity; it reads PRGAPGPAGNDGAKGEPGAA. 2 stretches are compositionally biased toward gly residues: residues 498 to 507 and 531 to 540; these read GAPGGLGAPG and GGKGGDGAPG. 2 stretches are compositionally biased toward low complexity: residues 571-580 and 593-620; these read VAGPTGPRGA and AGFA…KGDA. Composition is skewed to gly residues over residues 621 to 630 and 645 to 654; these read GAPGPGGPVG and GARGGAGPPG. Low complexity-rich tracts occupy residues 655 to 665, 694 to 722, 731 to 743, 830 to 839, and 855 to 869; these read ATGFPGPAGRV, ETGA…PGXD, PQGL…LPGQ, APGAVGPSGK, and SGPA…PAGA. Residues 870–884 are compositionally biased toward basic and acidic residues; it reads KGDRGEAGEAGDRGG. Positions 906-934 are enriched in low complexity; that stretch reads PAGASGPAGPRGPAGSNGAPGKDGMNGLP. Residues 952 to 967 show a composition bias toward pro residues; sequence AGPPGPPGPAGPPGPP. The region spanning 999 to 1029 is the Fibrillar collagen NC1 domain; sequence TQKLPLLDLAPMDVGAPDQEFGVEVGPVCFL.

The protein belongs to the fibrillar collagen family.

The protein resides in the secreted. It localises to the extracellular space. Its subcellular location is the extracellular matrix. This chain is Collagen, type I, alpha 1b, found in Epinephelus aeneus (White grouper).